Consider the following 118-residue polypeptide: Large ribosomal subunit protein bL19 (118 aa).

It belongs to the bacterial ribosomal protein bL19 family.

This protein is located at the 30S-50S ribosomal subunit interface and may play a role in the structure and function of the aminoacyl-tRNA binding site. The sequence is that of Large ribosomal subunit protein bL19 from Campylobacter concisus (strain 13826).